A 375-amino-acid polypeptide reads, in one-letter code: MVGFGANRRGGRLPSFLLAALLLVIAVLAFNCWNAASRQAVLREELAELQSQAKRTEVARGRLEKRNSDLLGRVDSHRKQLEQKEADYSQLSSQLQARDGQVKRCEDSRVKLQNNISYQMADIHRLKEQLAELRQEFIRQEDQLHEYKKNNTYLTRRLEYDSLQCGQQIKEMRIQHEENIKKLMDQIVREQKATQRIQSSKDAEVNPNGDNQPISKTVPEMEVKNAENNELPSDRVVNGKEKVKPGGDAGMPEIEDNDPAKAEDTPTAPRSDNHHQADVNLPTEQPHAPNLAPGLHGDSDGNADIAKEIPPNSLQHLNFGENMDSQNENKIEADHLKLQKGRAVGLQKMKQNDEERDLQNDLVDYSKPRFGDGVL.

Residues 1 to 12 (MVGFGANRRGGR) are Cytoplasmic-facing. A helical; Signal-anchor for type II membrane protein transmembrane segment spans residues 13–33 (LPSFLLAALLLVIAVLAFNCW). A coiled-coil region spans residues 34–198 (NAASRQAVLR…REQKATQRIQ (165 aa)). Residues 34-375 (NAASRQAVLR…SKPRFGDGVL (342 aa)) lie on the Lumenal side of the membrane. 3 disordered regions span residues 81-102 (LEQKEADYSQLSSQLQARDGQV), 193-327 (ATQR…DSQN), and 342-375 (RAVGLQKMKQNDEERDLQNDLVDYSKPRFGDGVL). Basic and acidic residues-rich tracts occupy residues 193-204 (ATQRIQSSKDAE) and 350-375 (KQNDEERDLQNDLVDYSKPRFGDGVL).

It belongs to the GOLM family.

The protein localises to the membrane. In Gallus gallus (Chicken), this protein is Protein GOLM2 (GOLM2).